A 445-amino-acid chain; its full sequence is D-serine transporter DsdX (445 aa).

12 helical membrane-spanning segments follow: residues 5 to 25 (IWVV…IVKF), 29 to 49 (PFLA…MGPL), 57 to 77 (SGIG…TILG), 106 to 126 (VLVG…VLLI), 140 to 160 (LLKL…VVPP), 178 to 198 (VIVY…PLFL), 224 to 244 (TLPS…LMLV), 265 to 285 (IGNP…VLGI), 302 to 322 (FGSI…NAIL), 343 to 363 (ILLA…ATVA), 385 to 405 (IIAI…DSLF), and 425 to 445 (TATF…SFII).

Belongs to the GntP permease family.

Its subcellular location is the cell inner membrane. With respect to regulation, uptake of D-serine is inhibited by carbonyl cyanide m-chlorophenylhydrazone (CCCP), and at high concentrations of D-threonine, stimulated by D-cycloserine and not affected by D-alanine or glycine. Protein that allows transport of D-serine across the inner membrane, does not transport D-alanine nor probably glycine. Is probably a H(+) symporter, as CCCP inhibits transport. Transports D-serine more efficiently than CycA. This is D-serine transporter DsdX (dsdX) from Escherichia coli O6:H1 (strain CFT073 / ATCC 700928 / UPEC).